The primary structure comprises 1074 residues: Transmembrane protein 132E (1074 aa).

The first 23 residues, 1-23, serve as a signal peptide directing secretion; sequence MAPGMSGRRGAALLCLSVLLAHA. The Extracellular portion of the chain corresponds to 26–894; sequence RSHPASPSPP…LTDLEIGMYA (869 aa). Asparagine 70 and asparagine 91 each carry an N-linked (GlcNAc...) asparagine glycan. Disordered stretches follow at residues 205-224 and 243-266; these read PAAP…PEAA and GGCG…ESPT. Over residues 247 to 262 the composition is skewed to low complexity; the sequence is SARRGPGPGPGAAARA. Residues asparagine 320 and asparagine 401 are each glycosylated (N-linked (GlcNAc...) asparagine). Disordered regions lie at residues 564 to 587 and 816 to 867; these read RRSA…ANRG and GRDE…PVPP. The segment covering 843 to 854 has biased composition (low complexity); sequence GAGPPGTAIPAG. The chain crosses the membrane as a helical span at residues 895–915; that stretch reads LLGVFCLAILVFLINCIVFVL. The Cytoplasmic segment spans residues 916-1074; it reads RYRHKRIPPE…NYMRRIKDIA (159 aa). Positions 962–1064 are disordered; that stretch reads VPACCHGDHH…TRPTPPPDLH (103 aa). 2 stretches are compositionally biased toward low complexity: residues 973-985 and 1016-1026; these read SGSS…SQVH and FTTFTTLPTEE. Positions 1035 to 1044 are enriched in acidic residues; it reads GEEEDEEEDL.

Belongs to the TMEM132 family. In terms of tissue distribution, widely expressed, with highest levels in the cochlea. In the cochlea, detected in spiral ganglion, the organ of Corti and stria vascularis. In the organ of Corti, prominently expressed in the outer and inner hair cells, especially at the apical and basal region of the outer hair cell body (at protein level).

The protein localises to the membrane. Its function is as follows. Required for normal inner ear hair cell function and hearing. The protein is Transmembrane protein 132E (Tmem132e) of Mus musculus (Mouse).